Reading from the N-terminus, the 691-residue chain is MTDEPQSDEQQTTEQERPLGTKRATRADGLRRPGVRSGLAERRSPAADSVRNGAAAVRRFLLRDVFALGLMIAALVIVILFFTLLGATKPTSSGTGIPLSQVFTLARDRAIVEATLLDEDARVQVHTRDGAEYWAAYPSSGAQTATLSSALERGGAIVAVKQQPGKAQVTIVVQFLLPILLLVCLFALFMRIGQDGGAGGIASFSNFTGRGRKKGKGTAHRVTFADIAGVPEAVAELAEIRDYLDDPSRYLDLGAAAPKGVLLVGPPGTGKTLLAKAVAGEADAAFFSLSGSDFVESLVGVGAARVRDLFAKARRMSPAIIFIDEFDAAGRKRGAGIGQGNDEREQTLNQLLVEMDGFSGDGGLVVMGATNRPDILDPALLRPGRFDRQITVDTPDVHGRSEILRLHGSKRPMAPDADLDEIARLTPGFSGAELANVVNEAALLTVRGGRREISQKLLEESIDRVVAGPAKKHLLTERERWIISIHESSHAVVTEAMGTGATARKVSIVARGRSLGTAAHMLTDRDQTIMEEPDLVMQLIAMLAGAAGERIEFGHLSTGVHDDLHEATSLARSMVTSFGMSDELGPVTIGEKSGEVFLGASLQDLGAVGPKTLDLIDDAVERLVKDAELVARAILRINIDAVHETAHALLEHETLSGVALEAVLSTVTTVEPEHFPELRERERGSARDRDA.

Positions 1–48 are disordered; sequence MTDEPQSDEQQTTEQERPLGTKRATRADGLRRPGVRSGLAERRSPAAD. Topologically, residues 1–64 are cytoplasmic; that stretch reads MTDEPQSDEQ…AAVRRFLLRD (64 aa). Over residues 14–31 the composition is skewed to basic and acidic residues; that stretch reads EQERPLGTKRATRADGLR. Residues 65 to 85 form a helical membrane-spanning segment; sequence VFALGLMIAALVIVILFFTLL. Topologically, residues 86–168 are extracellular; the sequence is GATKPTSSGT…AVKQQPGKAQ (83 aa). Residues 169–189 traverse the membrane as a helical segment; sequence VTIVVQFLLPILLLVCLFALF. Topologically, residues 190–691 are cytoplasmic; the sequence is MRIGQDGGAG…ERGSARDRDA (502 aa). 265–272 serves as a coordination point for ATP; sequence GPPGTGKT. Position 486 (His486) interacts with Zn(2+). Glu487 is an active-site residue. Zn(2+)-binding residues include His490 and Asp563.

The protein in the central section; belongs to the AAA ATPase family. This sequence in the C-terminal section; belongs to the peptidase M41 family. Homohexamer. Requires Zn(2+) as cofactor.

The protein localises to the cell membrane. Its function is as follows. Acts as a processive, ATP-dependent zinc metallopeptidase for both cytoplasmic and membrane proteins. Plays a role in the quality control of integral membrane proteins. The chain is ATP-dependent zinc metalloprotease FtsH 2 from Conexibacter woesei (strain DSM 14684 / CCUG 47730 / CIP 108061 / JCM 11494 / NBRC 100937 / ID131577).